Consider the following 129-residue polypeptide: Prefoldin subunit 4 (129 aa).

Met-1 carries the N-acetylmethionine modification.

It belongs to the prefoldin subunit beta family. In terms of assembly, heterohexamer of two PFD-alpha type and four PFD-beta type subunits.

Its function is as follows. Binds specifically to cytosolic chaperonin (c-CPN) and transfers target proteins to it. Binds to nascent polypeptide chain and promotes folding in an environment in which there are many competing pathways for nonnative proteins. The sequence is that of Prefoldin subunit 4 (GIM3) from Saccharomyces cerevisiae (strain ATCC 204508 / S288c) (Baker's yeast).